We begin with the raw amino-acid sequence, 238 residues long: Ribonuclease PH (238 aa).

Residues R86 and 124–126 each bind phosphate; that span reads GTR.

It belongs to the RNase PH family. In terms of assembly, homohexameric ring arranged as a trimer of dimers.

The catalysed reaction is tRNA(n+1) + phosphate = tRNA(n) + a ribonucleoside 5'-diphosphate. Its function is as follows. Phosphorolytic 3'-5' exoribonuclease that plays an important role in tRNA 3'-end maturation. Removes nucleotide residues following the 3'-CCA terminus of tRNAs; can also add nucleotides to the ends of RNA molecules by using nucleoside diphosphates as substrates, but this may not be physiologically important. Probably plays a role in initiation of 16S rRNA degradation (leading to ribosome degradation) during starvation. This is Ribonuclease PH from Yersinia enterocolitica serotype O:8 / biotype 1B (strain NCTC 13174 / 8081).